Here is a 752-residue protein sequence, read N- to C-terminus: Photosystem I P700 chlorophyll a apoprotein A1 (752 aa).

Transmembrane regions (helical) follow at residues I73–A96, L159–H182, L198–L222, I294–Y312, W349–Y372, L388–I414, A436–H458, and F533–L551. 2 residues coordinate [4Fe-4S] cluster: C575 and C584. A run of 2 helical transmembrane segments spans residues H591–W612 and I666–F688. Residue H677 coordinates chlorophyll a'. Residues M685 and Y693 each coordinate chlorophyll a. W694 provides a ligand contact to phylloquinone. A helical membrane pass occupies residues A726 to S746.

This sequence belongs to the PsaA/PsaB family. As to quaternary structure, the PsaA/B heterodimer binds the P700 chlorophyll special pair and subsequent electron acceptors. PSI consists of a core antenna complex that captures photons, and an electron transfer chain that converts photonic excitation into a charge separation. The eukaryotic PSI reaction center is composed of at least 11 subunits. It depends on P700 is a chlorophyll a/chlorophyll a' dimer, A0 is one or more chlorophyll a, A1 is one or both phylloquinones and FX is a shared 4Fe-4S iron-sulfur center. as a cofactor.

It localises to the plastid. It is found in the chloroplast thylakoid membrane. It carries out the reaction reduced [plastocyanin] + hnu + oxidized [2Fe-2S]-[ferredoxin] = oxidized [plastocyanin] + reduced [2Fe-2S]-[ferredoxin]. In terms of biological role, psaA and PsaB bind P700, the primary electron donor of photosystem I (PSI), as well as the electron acceptors A0, A1 and FX. PSI is a plastocyanin/cytochrome c6-ferredoxin oxidoreductase, converting photonic excitation into a charge separation, which transfers an electron from the donor P700 chlorophyll pair to the spectroscopically characterized acceptors A0, A1, FX, FA and FB in turn. Oxidized P700 is reduced on the lumenal side of the thylakoid membrane by plastocyanin or cytochrome c6. The sequence is that of Photosystem I P700 chlorophyll a apoprotein A1 from Cyanidium caldarium (Red alga).